The primary structure comprises 76 residues: Beta-defensin 121 (76 aa).

The N-terminal stretch at 1–15 (MKLLLLLLTVTLLLA) is a signal peptide. Disulfide bonds link Cys-23–Cys-50, Cys-30–Cys-44, and Cys-34–Cys-51.

It belongs to the beta-defensin family. As to expression, abundant expression in the male reproductive tract only.

It localises to the secreted. Its function is as follows. Has antibacterial activity. The protein is Beta-defensin 121 (DEFB121) of Macaca mulatta (Rhesus macaque).